Consider the following 466-residue polypeptide: Asparagine--tRNA ligase (466 aa).

It belongs to the class-II aminoacyl-tRNA synthetase family. As to quaternary structure, homodimer.

The protein resides in the cytoplasm. It carries out the reaction tRNA(Asn) + L-asparagine + ATP = L-asparaginyl-tRNA(Asn) + AMP + diphosphate + H(+). The chain is Asparagine--tRNA ligase from Shewanella pealeana (strain ATCC 700345 / ANG-SQ1).